We begin with the raw amino-acid sequence, 353 residues long: Peroxisome assembly protein 12-B (353 aa).

Residues 1–19 (MAERGAHITTTSPLDDRPS) are Peroxisomal matrix-facing. A helical membrane pass occupies residues 20–47 (IFEVVAQESLMAAARPALHHIVKVLAES). Residues 48 to 51 (NPAR) are Cytoplasmic-facing. The chain crosses the membrane as a helical span at residues 52 to 76 (YGTLWRWFDELYTLLECLLQQHYLS). Topologically, residues 77–104 (WASASFSENFYGLKRVTLGKQVGQRNLA) are peroxisomal matrix. The helical transmembrane segment at 105–134 (RKEYWKSLLLLVLIPYLRIKLEKLVNSLRE) threads the bilayer. The Cytoplasmic segment spans residues 135 to 139 (EEDYS). Residues 140–178 (IQNPTSFHKRCYKAILASYPFLKLGWEAWFLFYQLRYIL) form a helical membrane-spanning segment. The Peroxisomal matrix portion of the chain corresponds to 179–243 (WNGKHHSPLL…LGAVTLSVSS (65 aa)). Residues 244-271 (SLSLGVFFLQFLDWWYSAENRETLKSLG) form a helical membrane-spanning segment. Residues 272–353 (NLPVPPPPIH…HLIKLYTPDG (82 aa)) are Cytoplasmic-facing. Zn(2+) is bound by residues Cys298, Cys301, Cys319, and Cys322. Residues 298-337 (CPLCRKVRVNDTALGTSGYVFCYRCAYYYVKTHQRCPVSG) form an RING-type; degenerate zinc finger.

Belongs to the pex2/pex10/pex12 family. Component of the PEX2-PEX10-PEX12 retrotranslocation channel.

It is found in the peroxisome membrane. Its pathway is protein modification; protein ubiquitination. Component of a retrotranslocation channel required for peroxisome organization by mediating export of the PEX5 receptor from peroxisomes to the cytosol, thereby promoting PEX5 recycling. The retrotranslocation channel is composed of PEX2, PEX10 and PEX12; each subunit contributing transmembrane segments that coassemble into an open channel that specifically allows the passage of PEX5 through the peroxisomal membrane. PEX12 also regulates PEX5 recycling by activating the E3 ubiquitin-protein ligase activity of PEX10. When PEX5 recycling is compromised, PEX12 stimulates PEX10-mediated polyubiquitination of PEX5, leading to its subsequent degradation. The protein is Peroxisome assembly protein 12-B of Xenopus laevis (African clawed frog).